Consider the following 956-residue polypeptide: uncharacterized protein (956 aa).

Residues 40-141 (PATKVSIDKI…IYCMTKAREA (102 aa)) enclose the Fibronectin type-III domain. Disordered regions lie at residues 152–173 (RNTITSSTAMQPRNSKSEPAPL) and 488–600 (NNGD…SYSH). Composition is skewed to polar residues over residues 153 to 165 (NTITSSTAMQPRN) and 488 to 523 (NNGDSLAATNSNNSAEKNRSSGSIQLPLSNNMSRTG). Threonine 154 bears the Phosphothreonine mark. Phosphoserine is present on residues serine 501 and serine 520. Positions 524–543 (SIDLISNNNKSINNSNADSA) are enriched in low complexity. Polar residues predominate over residues 552 to 563 (VSYSPSNEPIQP). Residues 564 to 574 (SSSLLSQLTQD) are compositionally biased toward low complexity. Over residues 578–599 (RSMLSNHISSNNENKQQPSSYS) the composition is skewed to polar residues. 3 positions are modified to phosphoserine: serine 802, serine 842, and serine 895. The disordered stretch occupies residues 875-956 (VGPKVPAKEP…NLFNPHSHDS (82 aa)). A compositionally biased stretch (low complexity) spans 895–904 (SNSSISSAWS).

This is an uncharacterized protein from Saccharomyces cerevisiae (strain ATCC 204508 / S288c) (Baker's yeast).